Consider the following 139-residue polypeptide: MGVVSISMPDELEERIDTFADEHGYTGRSEVVREAVRNLMGEFEDKRLEDRELMAVVTVLFDYETTTVEEKMMHLRHDHESIVASNFHSHVGDRYCMELFVLEGQLEDISAFVGKVRATKDTLSVDYSVLPVDDINMFT.

H77, H88, H90, and C96 together coordinate Ni(2+).

This sequence belongs to the transcriptional regulatory CopG/NikR family. It depends on Ni(2+) as a cofactor.

Its function is as follows. Transcriptional regulator. This is Putative nickel-responsive regulator from Haloarcula marismortui (strain ATCC 43049 / DSM 3752 / JCM 8966 / VKM B-1809) (Halobacterium marismortui).